We begin with the raw amino-acid sequence, 458 residues long: Tubulin beta chain (458 aa).

8 residues coordinate GTP: glutamine 11, glutamate 69, serine 138, glycine 142, threonine 143, glycine 144, asparagine 204, and asparagine 226. Position 69 (glutamate 69) interacts with Mg(2+). Positions 426-458 are disordered; the sequence is EAATVEGEEEEDEYAEGGVVNGDQSYDEPYQAA. Residues 431–440 show a composition bias toward acidic residues; it reads EGEEEEDEYA.

Belongs to the tubulin family. In terms of assembly, dimer of alpha and beta chains. A typical microtubule is a hollow water-filled tube with an outer diameter of 25 nm and an inner diameter of 15 nM. Alpha-beta heterodimers associate head-to-tail to form protofilaments running lengthwise along the microtubule wall with the beta-tubulin subunit facing the microtubule plus end conferring a structural polarity. Microtubules usually have 13 protofilaments but different protofilament numbers can be found in some organisms and specialized cells. Mg(2+) is required as a cofactor.

It is found in the cytoplasm. Its subcellular location is the cytoskeleton. Its function is as follows. Tubulin is the major constituent of microtubules, a cylinder consisting of laterally associated linear protofilaments composed of alpha- and beta-tubulin heterodimers. Microtubules grow by the addition of GTP-tubulin dimers to the microtubule end, where a stabilizing cap forms. Below the cap, tubulin dimers are in GDP-bound state, owing to GTPase activity of alpha-tubulin. This is Tubulin beta chain (TUBB1) from Pyropia yezoensis (Susabi-nori).